Here is a 484-residue protein sequence, read N- to C-terminus: Putative amidase AmiA2 (484 aa).

Residues Lys93 and Ser167 each act as charge relay system in the active site. Ser191 (acyl-ester intermediate) is an active-site residue.

The protein belongs to the amidase family.

It carries out the reaction a monocarboxylic acid amide + H2O = a monocarboxylate + NH4(+). The protein is Putative amidase AmiA2 (amiA2) of Mycobacterium bovis (strain ATCC BAA-935 / AF2122/97).